A 271-amino-acid polypeptide reads, in one-letter code: 5'-nucleotidase SurE (271 aa).

Positions 14, 15, 46, and 104 each coordinate a divalent metal cation.

This sequence belongs to the SurE nucleotidase family. A divalent metal cation serves as cofactor.

It localises to the cytoplasm. The catalysed reaction is a ribonucleoside 5'-phosphate + H2O = a ribonucleoside + phosphate. Nucleotidase that shows phosphatase activity on nucleoside 5'-monophosphates. This Gloeothece citriformis (strain PCC 7424) (Cyanothece sp. (strain PCC 7424)) protein is 5'-nucleotidase SurE.